Here is a 327-residue protein sequence, read N- to C-terminus: MEGSNGFGIDSILSHRAGSPALPKGDPLLGDCRSPLELSPRSESSSDCSSPASPGRDCLETGTPRPGGASGPGLDSHLQPGQLSAPAQSRTVTSSFLIRDILADCKPLAACAPYSSSGQPAAPEPGGRLAAKAAEDFRDKLDKSGSNASSDSEYKVKEEGDREISSSRDSPPVRLKKPRKARTAFTDHQLAQLERSFERQKYLSVQDRMELAASLNLTDTQVKTWYQNRRTKWKRQTAVGLELLAEAGNYSALQRMFPSPYFYPQSLVSNLDPGAALYLYRGPSAPPPALQRPLVPRILIHGLQGASEPPPPLPPLAGVLPRAAQPR.

3 disordered regions span residues 1–90, 112–184, and 305–327; these read MEGS…AQSR, APYS…ARTA, and GASE…AQPR. Positions 33-54 are enriched in low complexity; that stretch reads RSPLELSPRSESSSDCSSPASP. The segment covering 79–90 has biased composition (polar residues); that stretch reads QPGQLSAPAQSR. Basic and acidic residues-rich tracts occupy residues 133-143 and 152-166; these read AAEDFRDKLDK and SEYK…EISS. Positions 178–237 form a DNA-binding region, homeobox; that stretch reads PRKARTAFTDHQLAQLERSFERQKYLSVQDRMELAASLNLTDTQVKTWYQNRRTKWKRQT. Residues 316-327 show a composition bias toward low complexity; the sequence is LAGVLPRAAQPR.

This sequence belongs to the BAR homeobox family.

The protein localises to the nucleus. The polypeptide is BarH-like 1 homeobox protein (BARHL1) (Homo sapiens (Human)).